A 447-amino-acid chain; its full sequence is Phosphoglucosamine mutase (447 aa).

Ser-100 (phosphoserine intermediate) is an active-site residue. Positions 100, 239, 241, and 243 each coordinate Mg(2+). Residue Ser-100 is modified to Phosphoserine.

It belongs to the phosphohexose mutase family. Mg(2+) is required as a cofactor. Activated by phosphorylation.

It carries out the reaction alpha-D-glucosamine 1-phosphate = D-glucosamine 6-phosphate. Catalyzes the conversion of glucosamine-6-phosphate to glucosamine-1-phosphate. The polypeptide is Phosphoglucosamine mutase (Halalkalibacterium halodurans (strain ATCC BAA-125 / DSM 18197 / FERM 7344 / JCM 9153 / C-125) (Bacillus halodurans)).